The primary structure comprises 195 residues: N-terminal acetyltransferase B complex catalytic subunit NAT3 (195 aa).

Positions 2-172 (TTIQPFEPVD…DAFDMRKAMA (171 aa)) constitute an N-acetyltransferase domain.

It belongs to the acetyltransferase family. GNAT subfamily. Component of the N-terminal acetyltransferase B (NatB) complex, which is composed of NAT3 and MDM20.

Its subcellular location is the cytoplasm. The catalysed reaction is N-terminal L-methionyl-L-asparaginyl-[protein] + acetyl-CoA = N-terminal N(alpha)-acetyl-L-methionyl-L-asparaginyl-[protein] + CoA + H(+). It catalyses the reaction N-terminal L-methionyl-L-glutaminyl-[protein] + acetyl-CoA = N-terminal N(alpha)-acetyl-L-methionyl-L-glutaminyl-[protein] + CoA + H(+). The enzyme catalyses N-terminal L-methionyl-L-aspartyl-[protein] + acetyl-CoA = N-terminal N(alpha)-acetyl-L-methionyl-L-aspartyl-[protein] + CoA + H(+). It carries out the reaction N-terminal L-methionyl-L-glutamyl-[protein] + acetyl-CoA = N-terminal N(alpha)-acetyl-L-methionyl-L-glutamyl-[protein] + CoA + H(+). Catalytic subunit of the NatB N-terminal acetyltransferase, which catalyzes acetylation of the amino-terminal methionine residues of all proteins beginning with Met-Asp or Met-Glu and of some proteins beginning with Met-Asn, Met-Gln or Met-Met. NatB acetylates TPM1 protein and regulates tropomyocin-actin interactions, it is presumed to N-acetylate 15% of all yeast proteins. In Saccharomyces cerevisiae (strain ATCC 204508 / S288c) (Baker's yeast), this protein is N-terminal acetyltransferase B complex catalytic subunit NAT3.